We begin with the raw amino-acid sequence, 496 residues long: Tripartite motif-containing protein 30A (496 aa).

The RING-type zinc finger occupies 15-59 (CPICLELLKEPVSADCNHSFCRACITLNYESNRNTDGKGNCPVCR). The B box-type zinc finger occupies 91–132 (QKVNICAQHGEKLRLFCRKDMMVICWLCERSQEHRGHQTALI). Zn(2+) contacts are provided by C96, H99, C118, and H124. Residues 173-239 (NQIQINVENV…RDLISDVEHH (67 aa)) are a coiled coil. Residues 205–210 (KKEKKE) form a highly hydrophilic region. Residues 268-276 (TVPQKRKRT) carry the Nuclear localization signal motif. The region spanning 281-496 (DLKGMLQVYQ…EPMTICGPPS (216 aa)) is the B30.2/SPRY domain.

In terms of assembly, homomultimer. Interacts with NR2C2/TAK1, TAB2 and TAB3. Does not interact with NLRP3, NLRC4 or TAB1. Highly expressed in spleen and lymph nodes (at protein level).

The protein resides in the cytoplasm. It localises to the nucleus. Trans-acting factor that regulates gene expression of interleukin 2 receptor alpha chain. May affect IL2R-alpha expression through cis-acting negative regulatory elements or through competition with proteins that bind to enhancer or activator sequences. Negatively regulates Toll-like receptor (TLR)-mediated activation of NFKB by promoting degradation of TAB2 and TAB3 and preventing TRAF6 autoubiquitination. Negatively regulates production of reactive oxygen species (ROS) which inhibits activation of the NLRP3 inflammasome complex. This, in turn, regulates activation of CASP1 and subsequent cleavage of IL1B and IL18. No activity detected against a range of retroviruses including a number of lentiviruses, gammaretroviruses and betaretroviruses. The polypeptide is Tripartite motif-containing protein 30A (Trim30a) (Mus musculus (Mouse)).